Consider the following 440-residue polypeptide: Trigger factor (440 aa).

Positions G163 to P248 constitute a PPIase FKBP-type domain.

Belongs to the FKBP-type PPIase family. Tig subfamily.

The protein localises to the cytoplasm. It carries out the reaction [protein]-peptidylproline (omega=180) = [protein]-peptidylproline (omega=0). Its function is as follows. Involved in protein export. Acts as a chaperone by maintaining the newly synthesized protein in an open conformation. Functions as a peptidyl-prolyl cis-trans isomerase. This is Trigger factor from Verminephrobacter eiseniae (strain EF01-2).